Here is a 648-residue protein sequence, read N- to C-terminus: Magnetosome protein MamZ (648 aa).

Residues 1–431 (MLEAWMPKSG…YAAWLLANGI (431 aa)) are major facilitator domain. 18 helical membrane passes run 28–49 (IIYL…IQPL), 69–87 (IQVV…FGLL), 94–113 (VRII…MSLL), 119–143 (LAFG…ADTV), 163–182 (LMGN…SAII), 188–207 (YKGG…IAGF), 252–273 (FYTR…ISVS), 285–305 (AHAA…IPLW), 317–335 (AIGA…LGMF), 341–361 (WLVA…FVTL), 373–395 (ILGA…LVQS), 407–428 (APFI…WLLA), 449–468 (PLVF…RSVI), 488–506 (YLGD…MRPV), 518–538 (YRRM…LAYV), 558–574 (FILL…PLAF), 595–612 (ATYV…LAAN), and 618–634 (PYVY…YRFY). Residues 444-645 (KVDWKPLVFL…WRGGNVLRAL (202 aa)) are ferric reductase-like domain, required for correct magnetite crystal formation.

The protein in the N-terminal section; belongs to the major facilitator superfamily. As to quaternary structure, probably interacts with FtsZ-like and MamY proteins.

It is found in the magnetosome membrane. In terms of biological role, required for correct biomineralization of the magnetosome; probably converts and then transports some form of iron. It is partially functionally redundant with MamH. May function with MamX, MamY amd Mms6 in biomineralization. Despite its strong similarity to MsrQ (AC V6EX82) this protein does not genetically interact with bona fide MsrP (AC V6F0A4), which is encoded elsewhere in the genome. This chain is Magnetosome protein MamZ, found in Magnetospirillum gryphiswaldense (strain DSM 6361 / JCM 21280 / NBRC 15271 / MSR-1).